Reading from the N-terminus, the 116-residue chain is ATP-dependent Clp protease adapter protein ClpS (116 aa).

Over residues 1–11 (MRRINTIMQGK) the composition is skewed to polar residues. The interval 1–23 (MRRINTIMQGKTNGGNGPESGTV) is disordered.

Belongs to the ClpS family. As to quaternary structure, binds to the N-terminal domain of the chaperone ClpA.

Its function is as follows. Involved in the modulation of the specificity of the ClpAP-mediated ATP-dependent protein degradation. This Brucella abortus (strain S19) protein is ATP-dependent Clp protease adapter protein ClpS.